A 461-amino-acid polypeptide reads, in one-letter code: Complement C1r subcomponent-like protein (461 aa).

Positions 1–22 are cleaved as a signal peptide; the sequence is MCWLLLWGILHTCPTQASVLLA. The CUB domain occupies 23-139; sequence QQFPQQLTSP…KGFLALYQAA (117 aa). Disulfide bonds link Cys71–Cys89 and Cys164–Cys197. Residues 138-199 form the Sushi domain; the sequence is AAVSQPNGDA…RGEEVPECVP (62 aa). The Peptidase S1 domain occupies 214-453; sequence TFGSSRAKPG…YVDWIKGVIE (240 aa). The active-site Charge relay system is the His252. The N-linked (GlcNAc...) asparagine glycan is linked to Asn265. Asp308 serves as the catalytic Charge relay system. An N-linked (GlcNAc...) asparagine glycan is attached at Asn332. Disulfide bonds link Cys371/Cys390 and Cys401/Cys431. The active-site Charge relay system is Ser405.

Belongs to the peptidase S1 family.

It localises to the secreted. Its function is as follows. Mediates the proteolytic cleavage of HP/haptoglobin in the endoplasmic reticulum. This Rattus norvegicus (Rat) protein is Complement C1r subcomponent-like protein (C1rl).